Here is a 37-residue protein sequence, read N- to C-terminus: Photosystem I reaction center subunit IX (37 aa).

The helical transmembrane segment at 4–24 (FLTTAPVVAAIWFTLTAGILI) threads the bilayer.

The protein belongs to the PsaJ family.

The protein localises to the cellular thylakoid membrane. May help in the organization of the PsaE and PsaF subunits. This chain is Photosystem I reaction center subunit IX, found in Synechococcus sp. (strain WH7803).